The chain runs to 421 residues: BEN domain-containing protein 5 (421 aa).

Residue lysine 133 is modified to N6-acetyllysine. A coiled-coil region spans residues 180-243; it reads RALYEELLRN…LNRRLQDVLL (64 aa). A Glycyl lysine isopeptide (Lys-Gly) (interchain with G-Cter in SUMO2) cross-link involves residue lysine 258. The BEN domain maps to 302–408; it reads GSGIWVDEEK…EKIMDINKSC (107 aa).

Its function is as follows. Acts as a transcriptional repressor. In Mus musculus (Mouse), this protein is BEN domain-containing protein 5 (Bend5).